Consider the following 589-residue polypeptide: Protein FAM117B (589 aa).

Residues 1–310 (MSQRVRRNGS…RDKERQSPFH (310 aa)) are disordered. Ser-10 carries the post-translational modification Phosphoserine. Gly residues predominate over residues 16-29 (SLGGGAVATAGGPG). Residues 45–56 (QQQQQQHGSPTR) show a composition bias toward low complexity. A compositionally biased stretch (gly residues) spans 57–85 (SGGGGGGNNNGGCCGGASGPAGGGGGGGP). Ser-106 carries the phosphoserine modification. Residues 108–136 (TVATQTGASATSTRGTSPTRSAAPGARGS) show a composition bias toward low complexity. Residues 137 to 146 (PPRPPPPPPL) are compositionally biased toward pro residues. Low complexity-rich tracts occupy residues 147–158 (LGTVSSPSSSPT) and 207–220 (PSSS…RTSS). 4 positions are modified to phosphoserine: Ser-210, Ser-219, Ser-220, and Ser-273. Positions 292-302 (RSKHSSRHHRD) are enriched in basic residues. Phosphoserine occurs at positions 345 and 391. Disordered regions lie at residues 370–464 (QDIP…NNSY) and 556–589 (STNT…EAEG). The segment covering 384-397 (QRSSSTRSIDTQTP) has biased composition (polar residues). A compositionally biased stretch (low complexity) spans 404–417 (SNNSSRSQSVSPTS). Phosphoserine is present on residues Ser-449 and Ser-457.

This chain is Protein FAM117B (FAM117B), found in Homo sapiens (Human).